We begin with the raw amino-acid sequence, 733 residues long: Phosphoribosylformylglycinamidine synthase subunit PurL (733 aa).

Residue histidine 32 is part of the active site. Position 35 (tyrosine 35) interacts with ATP. Glutamate 81 lines the Mg(2+) pocket. Residues 82–85 (SHNH) and arginine 104 contribute to the substrate site. Catalysis depends on histidine 83, which acts as the Proton acceptor. A Mg(2+)-binding site is contributed by aspartate 105. Position 230 (glutamine 230) interacts with substrate. Residue aspartate 258 coordinates Mg(2+). Position 301 to 303 (301 to 303 (ESQ)) interacts with substrate. Aspartate 482 and glycine 519 together coordinate ATP. Asparagine 520 serves as a coordination point for Mg(2+). Substrate is bound at residue serine 522.

Belongs to the FGAMS family. As to quaternary structure, monomer. Part of the FGAM synthase complex composed of 1 PurL, 1 PurQ and 2 PurS subunits.

The protein resides in the cytoplasm. The catalysed reaction is N(2)-formyl-N(1)-(5-phospho-beta-D-ribosyl)glycinamide + L-glutamine + ATP + H2O = 2-formamido-N(1)-(5-O-phospho-beta-D-ribosyl)acetamidine + L-glutamate + ADP + phosphate + H(+). It functions in the pathway purine metabolism; IMP biosynthesis via de novo pathway; 5-amino-1-(5-phospho-D-ribosyl)imidazole from N(2)-formyl-N(1)-(5-phospho-D-ribosyl)glycinamide: step 1/2. Functionally, part of the phosphoribosylformylglycinamidine synthase complex involved in the purines biosynthetic pathway. Catalyzes the ATP-dependent conversion of formylglycinamide ribonucleotide (FGAR) and glutamine to yield formylglycinamidine ribonucleotide (FGAM) and glutamate. The FGAM synthase complex is composed of three subunits. PurQ produces an ammonia molecule by converting glutamine to glutamate. PurL transfers the ammonia molecule to FGAR to form FGAM in an ATP-dependent manner. PurS interacts with PurQ and PurL and is thought to assist in the transfer of the ammonia molecule from PurQ to PurL. The polypeptide is Phosphoribosylformylglycinamidine synthase subunit PurL (Methanocaldococcus jannaschii (strain ATCC 43067 / DSM 2661 / JAL-1 / JCM 10045 / NBRC 100440) (Methanococcus jannaschii)).